Consider the following 138-residue polypeptide: Transcription antitermination protein NusB (138 aa).

This sequence belongs to the NusB family.

Its function is as follows. Involved in transcription antitermination. Required for transcription of ribosomal RNA (rRNA) genes. Binds specifically to the boxA antiterminator sequence of the ribosomal RNA (rrn) operons. This is Transcription antitermination protein NusB from Colwellia psychrerythraea (strain 34H / ATCC BAA-681) (Vibrio psychroerythus).